The primary structure comprises 433 residues: Pyrimidine-nucleoside phosphorylase (433 aa).

Phosphate is bound at residue 81 to 83; sequence KHS. 2 residues coordinate K(+): Gly-88 and Thr-90. Residues Thr-92, 108–110, and Thr-120 contribute to the phosphate site; that span reads KMS. Substrate contacts are provided by Arg-168 and Lys-187. Residues Leu-243, Ala-246, and Glu-255 each coordinate K(+).

This sequence belongs to the thymidine/pyrimidine-nucleoside phosphorylase family. In terms of assembly, homodimer. It depends on K(+) as a cofactor.

It catalyses the reaction uridine + phosphate = alpha-D-ribose 1-phosphate + uracil. The enzyme catalyses thymidine + phosphate = 2-deoxy-alpha-D-ribose 1-phosphate + thymine. The catalysed reaction is 2'-deoxyuridine + phosphate = 2-deoxy-alpha-D-ribose 1-phosphate + uracil. In terms of biological role, catalyzes phosphorolysis of the pyrimidine nucleosides uridine, thymidine and 2'-deoxyuridine with the formation of the corresponding pyrimidine base and ribose-1-phosphate. The sequence is that of Pyrimidine-nucleoside phosphorylase from Bacillus subtilis (strain 168).